The chain runs to 295 residues: Myosin light chain kinase A (295 aa).

In terms of domain architecture, Protein kinase spans 8 to 265 (YEFKEELGRG…ATNALNHPWL (258 aa)). ATP is bound by residues 14-22 (LGRGAFSIV) and K37. Residue D130 is the Proton acceptor of the active site. Phosphothreonine is present on residues T166 and T289. The interval 264–295 (WLKSNNSNNTIDTVKMKEYIVERQKTQTKLVN) is autoinhibitory domain.

It belongs to the protein kinase superfamily. CAMK Ser/Thr protein kinase family. CaMK subfamily. Autophosphorylated. Transiently phosphorylated on Thr-166 and Thr-289. This phosphorylation is gbpC-dependent.

The catalysed reaction is L-seryl-[myosin light chain] + ATP = O-phospho-L-seryl-[myosin light chain] + ADP + H(+). It carries out the reaction L-threonyl-[myosin light chain] + ATP = O-phospho-L-threonyl-[myosin light chain] + ADP + H(+). Possesses an autoinhibitory domain. Autophosphorylation appears to increase the enzymatic activity. Activation is gbdC-dependent. Does not have a calmodulin-binding domain. Functionally, phosphorylates a specific serine in the N-terminus of a myosin light chain. Phosphorylates regulatory myosin light chain (mlcR) during chemotaxis. mlcR phosphorylation increases the motility and actin-activated ATPase activity of myosin, contributing to chemotaxis. This Dictyostelium discoideum (Social amoeba) protein is Myosin light chain kinase A (mlkA).